Consider the following 532-residue polypeptide: Germ cell nuclear acidic-1 protein (532 aa).

The segment covering 1–10 (MPTPFRDLHN) has biased composition (basic and acidic residues). 3 disordered regions span residues 1-50 (MPTP…EPIS), 84-181 (REAP…GNFE), and 213-253 (YISE…DRKQ). The span at 14–32 (ASASSYETAWSSSFSSRRS) shows a compositional bias: low complexity. Composition is skewed to basic and acidic residues over residues 39 to 48 (SNLKEIKDEP), 94 to 107 (LLQKIEKEDERDML), and 124 to 133 (KPKEVKKALK). Residues 213 to 235 (YISEESSEEESEEEEEDVDDEEY) show a composition bias toward acidic residues. Over residues 236–251 (RESSPEVEAKISYSDR) the composition is skewed to basic and acidic residues. The 91-residue stretch at 308–398 (RRIFSAIPSE…GARCSSVFKS (91 aa)) folds into the SprT-like domain. Residues 468–489 (AKPVGPILSNSSKPSPPAPRRI) are disordered.

This sequence belongs to the serine-aspartate repeat-containing protein (SDr) family. As to quaternary structure, interacts with top-2; this interaction allows the resolution of topoisomerase II (top-2) DNA-protein cross-links. Mainly expressed in germ cells and early embryonic, proliferating cells.

It localises to the chromosome. May play a role in DNA-protein cross-links (DPCs) clearance through a SUMO-dependent recruitment to sites of DPCs, ensuring the genomic stability by protecting germ cells and early embryos from various sources of damage. May resolve the topoisomerase II (top-2) DPCs. Limits replication stress and DNA double-strand breaks. The chain is Germ cell nuclear acidic-1 protein from Caenorhabditis elegans.